The following is a 234-amino-acid chain: L-cystine transport system permease protein TcyB (234 aa).

Transmembrane regions (helical) follow at residues 8-28 (ALTLGTAIPWDLVQQSFWPIL), 36-56 (IPLTILSFIFGMILALITALA), 78-98 (TPLLVQLFIIFYLFPAFNVTL), 100-120 (PFPSAVIAFSLNVGAYASEII), and 199-219 (ILVIYIEAAFIYWIICFLLSL). The ABC transmembrane type-1 domain maps to 32 to 221 (IYYTIPLTIL…IICFLLSLVQ (190 aa)).

It belongs to the binding-protein-dependent transport system permease family. In terms of assembly, the complex is composed of two ATP-binding proteins (TcyC), two transmembrane proteins (TcyB) and a solute-binding protein (TcyA).

Its subcellular location is the cell membrane. Functionally, part of the ABC transporter complex TcyABC involved in L-cystine import. Probably responsible for the translocation of the substrate across the membrane. The protein is L-cystine transport system permease protein TcyB (tcyB) of Bacillus subtilis (strain 168).